The sequence spans 378 residues: Actin-related protein 2/3 complex subunit 1B (378 aa).

7 WD repeats span residues 8–47 (RFAE…HWER), 53–92 (KHDQ…WVPT), 97–138 (RLNR…WVSK), 143–182 (RHES…VDTK), 203–242 (LSYS…PLAQ), 257–295 (ISEK…KAAS), and 331–375 (VHDN…QELG). Residues 319 to 340 (TTANDASDSRGGVHDNSITSIV) are disordered.

The protein belongs to the WD repeat ARPC1 family. In terms of assembly, component of the Arp2/3 complex composed of ARP2, ARP3, ARPC1/p41-ARC, ARPC2/p34-ARC, ARPC3/p21-ARC, ARPC4/p20-ARC and ARPC5/p16-ARC. Expressed at low levels in all tissues with a relatively highest expression in inflorescences.

The protein localises to the cytoplasm. It localises to the cytoskeleton. In terms of biological role, functions as a component of the Arp2/3 complex which is involved in regulation of actin polymerization and together with an activating nucleation-promoting factor (NPF) mediates the formation of branched actin networks. Arp2/3 complex plays a critical role in the control of cell morphogenesis via the modulation of cell polarity development. The protein is Actin-related protein 2/3 complex subunit 1B (ARPC1B) of Arabidopsis thaliana (Mouse-ear cress).